Here is a 137-residue protein sequence, read N- to C-terminus: Putative FERT-1 protein (137 aa).

This is Putative FERT-1 protein (FERT-1) from Ascaris suum (Pig roundworm).